A 282-amino-acid chain; its full sequence is ABC transporter I family member 21 (282 aa).

An ABC transporter domain is found at 13–248 (IRVSGMQFSY…KTSPNLLSVV (236 aa)). An ATP-binding site is contributed by 46-53 (GANGSGKT).

Belongs to the ABC transporter superfamily. ABCI family. In terms of tissue distribution, expressed in root elongating zone and root meristem, as well as in elongating etiolated hypocotyls.

The protein localises to the cytoplasm. The polypeptide is ABC transporter I family member 21 (ABCI21) (Arabidopsis thaliana (Mouse-ear cress)).